A 2431-amino-acid chain; its full sequence is Reducing polyketide synthase rads1 (2431 aa).

The Ketosynthase family 3 (KS3) domain occupies 10–440 (RAPIAIIGLA…GTNAHIVLER (431 aa)). Catalysis depends on for beta-ketoacyl synthase activity residues cysteine 184, histidine 319, and histidine 363. The segment at 558–895 (FVFTGQGAQW…NLAAELFRRG (338 aa)) is malonyl-CoA:ACP transacylase (MAT) domain. The N-terminal hotdog fold stretch occupies residues 944 to 1080 (KSILGAELPS…GLISIAYEDT (137 aa)). Residues 944-1267 (KSILGAELPS…LAELEVDDAA (324 aa)) form the PKS/mFAS DH domain. The segment at 946-1264 (ILGAELPSMD…DFRLAELEVD (319 aa)) is dehydratase (DH) domain. The active-site Proton acceptor; for dehydratase activity is histidine 976. The segment at 1108–1267 (PETCSKERFY…LAELEVDDAA (160 aa)) is C-terminal hotdog fold. Aspartate 1174 serves as the catalytic Proton donor; for dehydratase activity. The enoyl reductase (ER) domain stretch occupies residues 1705-2023 (GLLNTLHFVP…QGKHLGKMIL (319 aa)). Catalysis depends on cysteine 1822, which acts as the Phosphocysteine intermediate. The segment at 2048 to 2228 (ATYLIVGGLG…VSVNLGIMRD (181 aa)) is ketoreductase (KR) domain. A Carrier domain is found at 2346–2423 (VAAAIITEAL…TFAVQIAKKS (78 aa)). Serine 2383 carries the post-translational modification O-(pantetheine 4'-phosphoryl)serine.

The protein operates within secondary metabolite biosynthesis. Reducing polyketide synthase; part of the gene cluster that mediates the biosynthesis of radicicol, a resorcylic acid lactone (RAL) that irreversibly inhibits the HSP90 molecular chaperone, an important target for cancer chemotherapy. The cluster encodes only two apparent post-PKS enzymes, a cytochrome P450 monooxygenase (radP) and a non-heme halogenase (radH) that introduce the epoxide and the chlorine, respectively. If this cluster includes all the genes required for radicicol biosynthesis, the remaining structural features of radicicol are presumably generated by the PKSs rads1 and rads2. The C-2' ketone could arise if the R-PKS rads1 and NR-PKS rads2 each carry out four iterations, in contrast to the five iteration-three iteration split for the hypothemycin PKSs. The origin of the cis 5',6' double bond is not known. The radicicol R-PKS radS1 ER domain may catalyze either double bond isomerization or reduction in the third iteration. This chain is Reducing polyketide synthase rads1, found in Floropilus chiversii (Chaetomium chiversii).